We begin with the raw amino-acid sequence, 201 residues long: Small ribosomal subunit protein uS2 (201 aa).

Belongs to the universal ribosomal protein uS2 family. Part of the 50S ribosomal subunit.

The protein is Small ribosomal subunit protein uS2 of Thermococcus kodakarensis (strain ATCC BAA-918 / JCM 12380 / KOD1) (Pyrococcus kodakaraensis (strain KOD1)).